A 600-amino-acid polypeptide reads, in one-letter code: Keratin, type II cuticular Hb4 (600 aa).

Residues 1–165 (MSCRSYRVSS…PNAQRVKKDE (165 aa)) form a head region. In terms of domain architecture, IF rod spans 165 to 476 (EKEQIKTLNN…RLLEGEESRL (312 aa)). Residues 166–200 (KEQIKTLNNKFASFIDKVRFLEQQNKLLETKWSFL) are coil 1A. The interval 201–210 (QEQKCIRSNL) is linker 1. Residues 211 to 311 (EPLFESYITN…YMEEIQLLQS (101 aa)) are coil 1B. The linker 12 stretch occupies residues 312 to 328 (HISETSVIVKMDNSRDL). Residues 329-472 (NLDGIIAEVK…ATYRRLLEGE (144 aa)) form a coil 2 region. The tail stretch occupies residues 473–600 (ESRLCEGVGP…STTTSCRTKY (128 aa)).

The protein belongs to the intermediate filament family. As to quaternary structure, heterotetramer of two type I and two type II keratins. As to expression, expressed in the hair follicles.

The chain is Keratin, type II cuticular Hb4 (KRT84) from Homo sapiens (Human).